The sequence spans 108 residues: MNKFIILAIFALAVGAMADYPKPAYHAPPPPPPHHLHAHPAPAPVVHTYPVHAPHAKCGANLLVGCAPSVAHVPCVPLPGHAPAHGYGHAPAPHYRAPESDSFDQFEE.

The signal sequence occupies residues M1–A18. The VM domain maps to H52–G88. The disordered stretch occupies residues Y87 to E108.

Belongs to the vitelline membrane family. In terms of tissue distribution, expressed in the middle and posterior regions of the follicle cells.

It is found in the secreted. In Aedes aegypti (Yellowfever mosquito), this protein is Vitelline membrane protein 15a-1.